The chain runs to 259 residues: MHNELNNHTITYSEDISNNISSKNNEKFTPKEIQILDKNKKFFSTDIKYVLTMLKIINGESDISIRVLDWFVANYSKKNNTYYNIKKNGKCDRFYVHNEYKNQLNGYSKQYFDPFCRKKKVAYKYTDKISKNVIQFESSIGQLNFFQWAIRNKIIRYVELHLKIIEEDMKETTKKNKEKKQNSQSQEISNSIEMEVSDDPDPNICLSSSINSICLSPVKKTSSASKSDSDKKNKRQQLSKSVYDHGIKKYDYPIQLDFD.

The stretch at 158–187 (VELHLKIIEEDMKETTKKNKEKKQNSQSQE) forms a coiled coil. The span at 172 to 181 (TTKKNKEKKQ) shows a compositional bias: basic and acidic residues. Disordered regions lie at residues 172–197 (TTKK…MEVS) and 217–240 (PVKK…QLSK). 2 stretches are compositionally biased toward low complexity: residues 182 to 193 (NSQSQEISNSIE) and 217 to 226 (PVKKTSSASK).

This is an uncharacterized protein from Acanthamoeba polyphaga mimivirus (APMV).